Here is a 708-residue protein sequence, read N- to C-terminus: Polyribonucleotide nucleotidyltransferase (708 aa).

Residues Asp-485 and Asp-491 each coordinate Mg(2+). Residues 552–611 (PKTYIMSIPPDKIRDVIGSGGKVINKIIAETGVKIDIKEDGKIFVMSEDSEGAKKALKII) enclose the KH domain. The S1 motif domain occupies 621-689 (GEIYLGKVTK…NQGRINLSRK (69 aa)). Residues 689-708 (KDAIKDSEKKEQNEKDVQKK) form a disordered region.

The protein belongs to the polyribonucleotide nucleotidyltransferase family. Requires Mg(2+) as cofactor.

Its subcellular location is the cytoplasm. It catalyses the reaction RNA(n+1) + phosphate = RNA(n) + a ribonucleoside 5'-diphosphate. Functionally, involved in mRNA degradation. Catalyzes the phosphorolysis of single-stranded polyribonucleotides processively in the 3'- to 5'-direction. This Clostridium kluyveri (strain NBRC 12016) protein is Polyribonucleotide nucleotidyltransferase.